We begin with the raw amino-acid sequence, 421 residues long: MTRRVVITGVGVRAPGGSGTKEFWDLLTAGRTATRPISFFDASPFRSRIAGEIDFDAVAEGFSPREVRRMDRATQFAVACTRDALADSGLDTGALDPSRIGVALGSAVASATSLENEYLVMSDSGREWLVDPAHLSPMMFDYLSPGVMPAEVAWAAGAEGPVTMVSDGCTSGLDSVGYAVQGTREGSADVVVAGAADTPVSPIVVACFDAIKATTPRNDDPAHASRPFDGTRNGFVLAEGAAMFVLEEYEAAQRRGAHIYAEVGGYATRSQAYHMTGLKKDGREMAESIRAALDEARLDRTAVDYVNAHGSGTKQNDRHETAAFKRSLGEHAYAVPVSSIKSMGGHSLGAIGSIEIAASVLAIEHNVVPPTANLHTPDPECDLDYVPLTAREQRVDTVLTVGSGFGGFQSAMVLHRPEEAA.

The Ketosynthase family 3 (KS3) domain occupies 2–416; that stretch reads TRRVVITGVG…GFQSAMVLHR (415 aa). Catalysis depends on for beta-ketoacyl synthase activity residues cysteine 169, histidine 309, and histidine 346.

It belongs to the thiolase-like superfamily. Beta-ketoacyl-ACP synthases family.

It functions in the pathway antibiotic biosynthesis; granaticin biosynthesis. In Streptomyces violaceoruber, this protein is Granaticin polyketide putative beta-ketoacyl synthase 1 (gra-orf1).